The chain runs to 448 residues: Chromosomal replication initiator protein DnaA (448 aa).

The interval 1 to 93 (MEQIVSSLWS…KPTEQNLSAS (93 aa)) is domain I, interacts with DnaA modulators. Residues 94–110 (STNKEELTQDTVHKFKT) are domain II. Positions 111-328 (GLNGRLTFDN…GAINRVSAWC (218 aa)) are domain III, AAA+ region. Glycine 156, glycine 158, lysine 159, and threonine 160 together coordinate ATP. The segment at 329-448 (NFTKRQITID…YTNLTRKLSS (120 aa)) is domain IV, binds dsDNA.

It belongs to the DnaA family. In terms of assembly, oligomerizes as a right-handed, spiral filament on DNA at oriC.

The protein localises to the cytoplasm. Its function is as follows. Plays an essential role in the initiation and regulation of chromosomal replication. ATP-DnaA binds to the origin of replication (oriC) to initiate formation of the DNA replication initiation complex once per cell cycle. Binds the DnaA box (a 9 base pair repeat at the origin) and separates the double-stranded (ds)DNA. Forms a right-handed helical filament on oriC DNA; dsDNA binds to the exterior of the filament while single-stranded (ss)DNA is stabiized in the filament's interior. The ATP-DnaA-oriC complex binds and stabilizes one strand of the AT-rich DNA unwinding element (DUE), permitting loading of DNA polymerase. After initiation quickly degrades to an ADP-DnaA complex that is not apt for DNA replication. Binds acidic phospholipids. The sequence is that of Chromosomal replication initiator protein DnaA from Haemophilus ducreyi (strain 35000HP / ATCC 700724).